Reading from the N-terminus, the 195-residue chain is Thymidylate kinase (195 aa).

7 to 14 (GVDTCGKS) serves as a coordination point for ATP.

The protein belongs to the thymidylate kinase family.

The catalysed reaction is dTMP + ATP = dTDP + ADP. Phosphorylation of dTMP to form dTDP in both de novo and salvage pathways of dTTP synthesis. This chain is Thymidylate kinase, found in Helicobacter hepaticus (strain ATCC 51449 / 3B1).